Consider the following 170-residue polypeptide: Photosystem I assembly protein Ycf3 (170 aa).

TPR repeat units follow at residues 35–68, 72–105, and 120–153; these read AFTYYRDGMLAQSEGNYAEALQNYYEAMRLEIDP, SYILYNIGLIHTSNGEHTKALEYYFRALERNPFL, and GEQAILQGDSEIAEAWFDQAAEYWKQAIALTPGN.

The protein belongs to the Ycf3 family.

Its subcellular location is the plastid. It localises to the chloroplast thylakoid membrane. In terms of biological role, essential for the assembly of the photosystem I (PSI) complex. May act as a chaperone-like factor to guide the assembly of the PSI subunits. The protein is Photosystem I assembly protein Ycf3 of Triticum aestivum (Wheat).